The sequence spans 363 residues: UDP-N-acetylglucosamine--N-acetylmuramyl-(pentapeptide) pyrophosphoryl-undecaprenol N-acetylglucosamine transferase (363 aa).

UDP-N-acetyl-alpha-D-glucosamine-binding positions include 14–16 (TGG), R171, S200, and Q290.

This sequence belongs to the glycosyltransferase 28 family. MurG subfamily.

The protein resides in the cell inner membrane. It catalyses the reaction di-trans,octa-cis-undecaprenyl diphospho-N-acetyl-alpha-D-muramoyl-L-alanyl-D-glutamyl-meso-2,6-diaminopimeloyl-D-alanyl-D-alanine + UDP-N-acetyl-alpha-D-glucosamine = di-trans,octa-cis-undecaprenyl diphospho-[N-acetyl-alpha-D-glucosaminyl-(1-&gt;4)]-N-acetyl-alpha-D-muramoyl-L-alanyl-D-glutamyl-meso-2,6-diaminopimeloyl-D-alanyl-D-alanine + UDP + H(+). It functions in the pathway cell wall biogenesis; peptidoglycan biosynthesis. Cell wall formation. Catalyzes the transfer of a GlcNAc subunit on undecaprenyl-pyrophosphoryl-MurNAc-pentapeptide (lipid intermediate I) to form undecaprenyl-pyrophosphoryl-MurNAc-(pentapeptide)GlcNAc (lipid intermediate II). The polypeptide is UDP-N-acetylglucosamine--N-acetylmuramyl-(pentapeptide) pyrophosphoryl-undecaprenol N-acetylglucosamine transferase (Borreliella afzelii (strain PKo) (Borrelia afzelii)).